A 245-amino-acid polypeptide reads, in one-letter code: 1-(5-phosphoribosyl)-5-[(5-phosphoribosylamino)methylideneamino] imidazole-4-carboxamide isomerase (245 aa).

Catalysis depends on Asp7, which acts as the Proton acceptor. Asp129 acts as the Proton donor in catalysis.

Belongs to the HisA/HisF family.

The protein resides in the cytoplasm. It catalyses the reaction 1-(5-phospho-beta-D-ribosyl)-5-[(5-phospho-beta-D-ribosylamino)methylideneamino]imidazole-4-carboxamide = 5-[(5-phospho-1-deoxy-D-ribulos-1-ylimino)methylamino]-1-(5-phospho-beta-D-ribosyl)imidazole-4-carboxamide. It participates in amino-acid biosynthesis; L-histidine biosynthesis; L-histidine from 5-phospho-alpha-D-ribose 1-diphosphate: step 4/9. The chain is 1-(5-phosphoribosyl)-5-[(5-phosphoribosylamino)methylideneamino] imidazole-4-carboxamide isomerase from Shewanella frigidimarina (strain NCIMB 400).